We begin with the raw amino-acid sequence, 818 residues long: H(+)/Cl(-) exchange transporter 3 (818 aa).

Residues 1-125 (MESEQLFHRG…WEMTKSLYDA (125 aa)) are Cytoplasmic-facing. 3 consecutive short sequence motifs (di-leucine internalization motif; mediates targeting to late endosome and lysosome membranes) follow at residues 28–29 (LL), 46–47 (LL), and 71–75 (LLDLL). A helical transmembrane segment spans residues 126–163 (WSGWLVVTLTGLASGALAGLIDIAADWMTDLKEGICLS). Residue N177 is glycosylated (N-linked (GlcNAc...) asparagine). Residues 209 to 232 (MNYIMYIFWALSFAFLAVSLVKVF) form a helical membrane-spanning segment. A Selectivity filter part_1 motif is present at residues 238 to 242 (GSGIP). S239 contributes to the chloride binding site. Positions 241–248 (IPEIKTIL) form an intramembrane region, helical. Helical transmembrane passes span 258–276 (GKWTLMIKTITLVLAVASG) and 282–301 (EGPLVHVACCCGNIFSYLFP). Residues 280 to 284 (GKEGP) carry the Selectivity filter part_2 motif. 2 intramembrane regions (helical) span residues 313-325 (VLSAASAAGVSVA) and 329-337 (PIGGVLFSL). 3 consecutive transmembrane segments (helical) span residues 349 to 367 (LWRSFFAALVAAFVLRSIN), 391 to 416 (FPFILLGVFGGLWGAFFIRANIAWCR), and 423 to 443 (FGKYPVLEVIIVAAITAVIAF). N-linked (GlcNAc...) asparagine glycosylation is found at N451 and N479. The next 2 helical transmembrane spans lie at 500–520 (IWQLCLALIFKIIMTVFTFGI) and 525–544 (GLFIPSMAIGAIAGRIVGIA). The short motif at 525-529 (GLFIP) is the Selectivity filter part_3 element. Position 527 (F527) interacts with chloride. 2 consecutive intramembrane regions (helical) follow at residues 572–586 (GLYAMVGAAACLGGV) and 590–601 (TVSLVVIVFELT). The note=Loop between two helices intramembrane region spans 602-605 (GGLE). A helical transmembrane segment spans residues 606-624 (YIVPLMAAVMTSKWVGDAF). Residues 625–818 (GREGIYEAHI…NQDPASIMFN (194 aa)) are Cytoplasmic-facing. Y630 contributes to the chloride binding site. CBS domains follow at residues 658–722 (MRPR…ARKK) and 755–812 (LDMS…NQDP). ATP contacts are provided by residues 689–691 (YNG) and 796–799 (TKKD).

This sequence belongs to the chloride channel (TC 2.A.49) family. ClC-3/CLCN3 subfamily. In terms of assembly, monomer and homodimer. Forms heterodimers with CLCN4. N-glycosylated. In terms of tissue distribution, abundant in brain, especially in the olfactory bulb, hippocampus, and cerebellum. A moderate expression is seen in the lung, kidney and adrenal gland.

The protein localises to the lysosome membrane. Its subcellular location is the late endosome membrane. It localises to the cell membrane. The protein resides in the early endosome membrane. In terms of biological role, strongly outwardly rectifying, electrogenic H(+)/Cl(-)exchanger which mediates the exchange of chloride ions against protons. The CLC channel family contains both chloride channels and proton-coupled anion transporters that exchange chloride or another anion for protons. The presence of conserved gating glutamate residues is typical for family members that function as antiporters. Functionally, strongly outwardly rectifying, electrogenic H(+)/Cl(-)exchanger which mediates the exchange of chloride ions against protons. May play an important role in neuronal cell function through regulation of membrane excitability by protein kinase C. It could help neuronal cells to establish short-term memory. This Rattus norvegicus (Rat) protein is H(+)/Cl(-) exchange transporter 3 (Clcn3).